Reading from the N-terminus, the 336-residue chain is Ketol-acid reductoisomerase (NADP(+)) (336 aa).

The region spanning 3 to 183 (AKMYYDRDVD…GCTKAGVLET (181 aa)) is the KARI N-terminal Rossmann domain. NADP(+) contacts are provided by residues 26 to 29 (YGSQ), arginine 49, serine 52, serine 54, and 84 to 87 (DEQQ). The active site involves histidine 109. Glycine 135 contributes to the NADP(+) binding site. Positions 184 to 329 (TFKEETETDL…KELRDQMPFI (146 aa)) constitute a KARI C-terminal knotted domain. Mg(2+) contacts are provided by aspartate 192, glutamate 196, glutamate 228, and glutamate 232. Serine 253 serves as a coordination point for substrate.

The protein belongs to the ketol-acid reductoisomerase family. The cofactor is Mg(2+).

It catalyses the reaction (2R)-2,3-dihydroxy-3-methylbutanoate + NADP(+) = (2S)-2-acetolactate + NADPH + H(+). The catalysed reaction is (2R,3R)-2,3-dihydroxy-3-methylpentanoate + NADP(+) = (S)-2-ethyl-2-hydroxy-3-oxobutanoate + NADPH + H(+). The protein operates within amino-acid biosynthesis; L-isoleucine biosynthesis; L-isoleucine from 2-oxobutanoate: step 2/4. It participates in amino-acid biosynthesis; L-valine biosynthesis; L-valine from pyruvate: step 2/4. In terms of biological role, involved in the biosynthesis of branched-chain amino acids (BCAA). Catalyzes an alkyl-migration followed by a ketol-acid reduction of (S)-2-acetolactate (S2AL) to yield (R)-2,3-dihydroxy-isovalerate. In the isomerase reaction, S2AL is rearranged via a Mg-dependent methyl migration to produce 3-hydroxy-3-methyl-2-ketobutyrate (HMKB). In the reductase reaction, this 2-ketoacid undergoes a metal-dependent reduction by NADPH to yield (R)-2,3-dihydroxy-isovalerate. The sequence is that of Ketol-acid reductoisomerase (NADP(+)) from Deinococcus radiodurans (strain ATCC 13939 / DSM 20539 / JCM 16871 / CCUG 27074 / LMG 4051 / NBRC 15346 / NCIMB 9279 / VKM B-1422 / R1).